The sequence spans 298 residues: Small ribosomal subunit biogenesis GTPase RsgA (298 aa).

The CP-type G domain maps to threonine 67 to leucine 228. GTP is bound by residues threonine 116–aspartate 119 and glycine 171–serine 179. The Zn(2+) site is built by cysteine 252, cysteine 257, histidine 259, and cysteine 265.

It belongs to the TRAFAC class YlqF/YawG GTPase family. RsgA subfamily. Monomer. Associates with 30S ribosomal subunit, binds 16S rRNA. The cofactor is Zn(2+).

The protein localises to the cytoplasm. Its function is as follows. One of several proteins that assist in the late maturation steps of the functional core of the 30S ribosomal subunit. Helps release RbfA from mature subunits. May play a role in the assembly of ribosomal proteins into the subunit. Circularly permuted GTPase that catalyzes slow GTP hydrolysis, GTPase activity is stimulated by the 30S ribosomal subunit. The sequence is that of Small ribosomal subunit biogenesis GTPase RsgA from Bacillus pumilus (strain SAFR-032).